The chain runs to 142 residues: ATP synthase epsilon chain (142 aa).

Belongs to the ATPase epsilon chain family. As to quaternary structure, F-type ATPases have 2 components, CF(1) - the catalytic core - and CF(0) - the membrane proton channel. CF(1) has five subunits: alpha(3), beta(3), gamma(1), delta(1), epsilon(1). CF(0) has three main subunits: a, b and c.

It is found in the cell inner membrane. In terms of biological role, produces ATP from ADP in the presence of a proton gradient across the membrane. The polypeptide is ATP synthase epsilon chain (Shewanella piezotolerans (strain WP3 / JCM 13877)).